The following is a 101-amino-acid chain: Small ribosomal subunit protein uS14 (101 aa).

This sequence belongs to the universal ribosomal protein uS14 family. In terms of assembly, part of the 30S ribosomal subunit. Contacts proteins S3 and S10.

Functionally, binds 16S rRNA, required for the assembly of 30S particles and may also be responsible for determining the conformation of the 16S rRNA at the A site. This Actinobacillus pleuropneumoniae serotype 5b (strain L20) protein is Small ribosomal subunit protein uS14.